We begin with the raw amino-acid sequence, 384 residues long: F-box protein At2g07140 (384 aa).

The F-box domain maps to 1-46 (MTLPELPKDLVEEILSFVPATSLKRLRSTCKGWNRLFKDDKRFTRI).

The chain is F-box protein At2g07140 from Arabidopsis thaliana (Mouse-ear cress).